We begin with the raw amino-acid sequence, 612 residues long: Elongation factor 4 (612 aa).

Residues 11–193 form the tr-type G domain; it reads KHIRNFSIVA…RIVTDISAPT (183 aa). GTP contacts are provided by residues 23–28 and 140–143; these read DHGKST and NKID.

It belongs to the TRAFAC class translation factor GTPase superfamily. Classic translation factor GTPase family. LepA subfamily.

It localises to the cell membrane. It catalyses the reaction GTP + H2O = GDP + phosphate + H(+). In terms of biological role, required for accurate and efficient protein synthesis under certain stress conditions. May act as a fidelity factor of the translation reaction, by catalyzing a one-codon backward translocation of tRNAs on improperly translocated ribosomes. Back-translocation proceeds from a post-translocation (POST) complex to a pre-translocation (PRE) complex, thus giving elongation factor G a second chance to translocate the tRNAs correctly. Binds to ribosomes in a GTP-dependent manner. The sequence is that of Elongation factor 4 from Lactobacillus delbrueckii subsp. bulgaricus (strain ATCC 11842 / DSM 20081 / BCRC 10696 / JCM 1002 / NBRC 13953 / NCIMB 11778 / NCTC 12712 / WDCM 00102 / Lb 14).